Reading from the N-terminus, the 138-residue chain is Large ribosomal subunit protein bL19 (138 aa).

It belongs to the bacterial ribosomal protein bL19 family.

This protein is located at the 30S-50S ribosomal subunit interface and may play a role in the structure and function of the aminoacyl-tRNA binding site. This is Large ribosomal subunit protein bL19 from Leptospira interrogans serogroup Icterohaemorrhagiae serovar Lai (strain 56601).